A 563-amino-acid chain; its full sequence is PTS system fructose-specific EIIB'BC component (563 aa).

2 consecutive PTS EIIB type-2 domains span residues 1-85 and 104-201; these read MKTL…KGHA and KRVV…KAVA. Residue Cys112 is the Phosphocysteine intermediate; for EIIB activity of the active site. Cys112 carries the post-translational modification Phosphocysteine; by EIIA. The 336-residue stretch at 226–561 folds into the PTS EIIC type-2 domain; it reads AYRHLLTGVS…KRPEVDAVAK (336 aa). The next 9 helical transmembrane spans lie at 236–256, 274–294, 304–324, 349–369, 382–402, 430–450, 463–483, 489–509, and 518–538; these read YMLP…AFGI, GGSA…FSIA, IGGM…IAGF, ILII…YLIG, WLQT…GGMM, MAAI…ATMV, GKAA…PFAA, VLPC…AIGA, and LFVL…VAII.

The protein resides in the cell inner membrane. The catalysed reaction is D-fructose(out) + N(pros)-phospho-L-histidyl-[protein] = D-fructose 1-phosphate(in) + L-histidyl-[protein]. The phosphoenolpyruvate-dependent sugar phosphotransferase system (sugar PTS), a major carbohydrate active transport system, catalyzes the phosphorylation of incoming sugar substrates concomitantly with their translocation across the cell membrane. The enzyme II FruAB PTS system is involved in fructose transport. This Escherichia coli (strain K12) protein is PTS system fructose-specific EIIB'BC component.